Here is a 522-residue protein sequence, read N- to C-terminus: Tyrosine-protein phosphatase 1 (522 aa).

Positions 32–63 (RSNSSISLSSSSHSSFSRMGSLGSLPTNSGSS) are disordered. A compositionally biased stretch (low complexity) spans 33–63 (SNSSISLSSSSHSSFSRMGSLGSLPTNSGSS). One can recognise a Tyrosine-protein phosphatase domain in the interval 97–471 (IKEEFRLLEE…LFCYKTILDE (375 aa)). The active-site Phosphocysteine intermediate is the C310. Residues 327 to 426 (MKKLDHYFKQ…DDAAESDLKY (100 aa)) are PTPase insert (Asn-rich). The span at 382 to 410 (NNNNNNNLNNNNNINNNSNGSNNTPQTEP) shows a compositional bias: low complexity. The disordered stretch occupies residues 382-420 (NNNNNNNLNNNNNINNNSNGSNNTPQTEPNNEEDDDDAA). Residues 411–420 (NNEEDDDDAA) are compositionally biased toward acidic residues.

This sequence belongs to the protein-tyrosine phosphatase family. Non-receptor class subfamily. In terms of tissue distribution, expressed predominantly in anterior-like cells and to a lesser degree in prestalk cells.

The protein localises to the cytoplasm. It is found in the cell membrane. The catalysed reaction is O-phospho-L-tyrosyl-[protein] + H2O = L-tyrosyl-[protein] + phosphate. Functionally, may have a role in growth and in the early stages of development. Affects the timing of development. The chain is Tyrosine-protein phosphatase 1 (ptpA1-1) from Dictyostelium discoideum (Social amoeba).